The primary structure comprises 583 residues: Aspartate--tRNA ligase (583 aa).

Position 174 (Glu-174) interacts with L-aspartate. Residues 198-201 (QITK) are aspartate. Position 220 (Arg-220) interacts with L-aspartate. ATP-binding positions include 220–222 (RDE) and Gln-229. His-443 lines the L-aspartate pocket. Position 477 (Glu-477) interacts with ATP. Arg-484 lines the L-aspartate pocket. 529–532 (GLDR) lines the ATP pocket.

Belongs to the class-II aminoacyl-tRNA synthetase family. Type 1 subfamily. As to quaternary structure, homodimer.

The protein resides in the cytoplasm. It carries out the reaction tRNA(Asp) + L-aspartate + ATP = L-aspartyl-tRNA(Asp) + AMP + diphosphate. Functionally, catalyzes the attachment of L-aspartate to tRNA(Asp) in a two-step reaction: L-aspartate is first activated by ATP to form Asp-AMP and then transferred to the acceptor end of tRNA(Asp). This Streptococcus suis (strain 98HAH33) protein is Aspartate--tRNA ligase.